The following is a 561-amino-acid chain: 2-succinyl-5-enolpyruvyl-6-hydroxy-3-cyclohexene-1-carboxylate synthase (561 aa).

It belongs to the TPP enzyme family. MenD subfamily. As to quaternary structure, homodimer. Requires Mg(2+) as cofactor. It depends on Mn(2+) as a cofactor. Thiamine diphosphate is required as a cofactor.

The catalysed reaction is isochorismate + 2-oxoglutarate + H(+) = 5-enolpyruvoyl-6-hydroxy-2-succinyl-cyclohex-3-ene-1-carboxylate + CO2. The protein operates within quinol/quinone metabolism; 1,4-dihydroxy-2-naphthoate biosynthesis; 1,4-dihydroxy-2-naphthoate from chorismate: step 2/7. It participates in quinol/quinone metabolism; menaquinone biosynthesis. In terms of biological role, catalyzes the thiamine diphosphate-dependent decarboxylation of 2-oxoglutarate and the subsequent addition of the resulting succinic semialdehyde-thiamine pyrophosphate anion to isochorismate to yield 2-succinyl-5-enolpyruvyl-6-hydroxy-3-cyclohexene-1-carboxylate (SEPHCHC). The polypeptide is 2-succinyl-5-enolpyruvyl-6-hydroxy-3-cyclohexene-1-carboxylate synthase (Proteus mirabilis (strain HI4320)).